The primary structure comprises 240 residues: CRISPR-associated protein Cas5 3 (240 aa).

It belongs to the CRISPR-associated protein Cas5 family. Subtype I-A/Apern subfamily. As to quaternary structure, part of the aCascade ribonucleoprotein complex.

In terms of biological role, CRISPR (clustered regularly interspaced short palindromic repeat) is an adaptive immune system that provides protection against mobile genetic elements (viruses, transposable elements and conjugative plasmids). CRISPR clusters contain spacers, sequences complementary to antecedent mobile elements, and target invading nucleic acids. CRISPR clusters are transcribed and processed into CRISPR RNA (crRNA). In Saccharolobus solfataricus (strain ATCC 35092 / DSM 1617 / JCM 11322 / P2) (Sulfolobus solfataricus), this protein is CRISPR-associated protein Cas5 3 (cas5c).